The primary structure comprises 164 residues: Protein-export protein SecB (164 aa).

It belongs to the SecB family. In terms of assembly, homotetramer, a dimer of dimers. One homotetramer interacts with 1 SecA dimer.

The protein resides in the cytoplasm. Functionally, one of the proteins required for the normal export of preproteins out of the cell cytoplasm. It is a molecular chaperone that binds to a subset of precursor proteins, maintaining them in a translocation-competent state. It also specifically binds to its receptor SecA. This chain is Protein-export protein SecB, found in Orientia tsutsugamushi (strain Ikeda) (Rickettsia tsutsugamushi).